A 265-amino-acid polypeptide reads, in one-letter code: Glutamate racemase (265 aa).

Substrate-binding positions include 12–13 (DS) and 44–45 (YG). The Proton donor/acceptor role is filled by cysteine 75. Position 76-77 (76-77 (NT)) interacts with substrate. Cysteine 186 functions as the Proton donor/acceptor in the catalytic mechanism. A substrate-binding site is contributed by 187 to 188 (TH).

It belongs to the aspartate/glutamate racemases family.

It carries out the reaction L-glutamate = D-glutamate. The protein operates within cell wall biogenesis; peptidoglycan biosynthesis. Its function is as follows. Provides the (R)-glutamate required for cell wall biosynthesis. This Pseudomonas aeruginosa (strain ATCC 15692 / DSM 22644 / CIP 104116 / JCM 14847 / LMG 12228 / 1C / PRS 101 / PAO1) protein is Glutamate racemase.